The chain runs to 206 residues: Capsid assembly scaffolding protein (206 aa).

The propeptide occupies 1–13 (MEENKLKFNLQFF). Disordered stretches follow at residues 1–50 (MEEN…PEQQ), 83–134 (AAKL…VDSS), and 173–206 (RQSPLTGGDSFNHSTKNKPQNLAEIARQKRIIKN). 2 stretches are compositionally biased toward basic and acidic residues: residues 25-38 (GDGKKGNPDKKEND) and 83-127 (AAKL…KMLS). The segment covering 173-192 (RQSPLTGGDSFNHSTKNKPQ) has biased composition (polar residues). The interval 186–206 (STKNKPQNLAEIARQKRIIKN) is helix-and-hook motif.

As to quaternary structure, found in the procapsid with the major capsid protein in a 2:1 capsid protein:scaffold protein molecular ratio. Post-translationally, the N-terminus is cleaved by ribosomal processing protease Prp.

Functionally, scaffolding protein involved in icosahedric procapsid assembly. Coassembles with capsid protein(s) to form the procapsid. The scaffolding protein is found within the capsid as a series of concentric shells. During DNA packaging, the scaffolding protein molecules are released from the procapsid. The protein is Capsid assembly scaffolding protein of Staphylococcus phage 80alpha.